The primary structure comprises 370 residues: StAR-related lipid transfer protein 7, mitochondrial (370 aa).

The transit peptide at 1–58 (MLPRRLLAAWLAGTRGGGLLALLANQCRFVTGLRVRRAQQIAQLYGRLYSESSRRVLL) directs the protein to the mitochondrion. The stretch at 86 to 111 (DEERIQEEELQRSINEMKRLEEMSNM) forms a coiled coil. Disordered stretches follow at residues 111–138 (MFQSSGVQHHPPEPKAQTEGNEDSEGKE) and 343–370 (MSSEAKATSQSSERKNEGSCGPARIEYA). One can recognise an START domain in the interval 112 to 327 (FQSSGVQHHP…LHMATLKAKN (216 aa)).

Proteolytically cleaved by PARL. In terms of tissue distribution, expressed in nasal epithelial cells. Down-regulated in nasal epithelial cells in patients experiencing an asthma exacerbation as compared to stable asthmatics and healthy controls.

The protein resides in the mitochondrion. Its function is as follows. May play a protective role in mucosal tissues by preventing exaggerated allergic responses. The sequence is that of StAR-related lipid transfer protein 7, mitochondrial (STARD7) from Homo sapiens (Human).